The following is a 238-amino-acid chain: Urease subunit alpha (238 aa).

The interval methionine 1–alanine 102 is urease gamma. Positions asparagine 103–glutamate 238 are urease beta.

In the N-terminal section; belongs to the urease gamma subunit family. This sequence in the C-terminal section; belongs to the urease beta subunit family. In terms of assembly, heterohexamer of 3 UreA (alpha) and 3 UreB (beta) subunits.

It localises to the cytoplasm. It catalyses the reaction urea + 2 H2O + H(+) = hydrogencarbonate + 2 NH4(+). Its pathway is nitrogen metabolism; urea degradation; CO(2) and NH(3) from urea (urease route): step 1/1. This is Urease subunit alpha from Helicobacter pylori (strain P12).